The primary structure comprises 2068 residues: uncharacterized protein (2068 aa).

2 helical membrane-spanning segments follow: residues 3–23 (FFIIIFILLLSFFFFDYNFCS) and 51–71 (TIYLIFPFLQHIFVHIFYYYI). Positions 975 to 998 (QMHSGEDEKEELGEPKEKGSKSCQ) are enriched in basic and acidic residues. Positions 975 to 1030 (QMHSGEDEKEELGEPKEKGSKSCQEEEEQDEEEEDEDEEEEEDQGVNNYDNYVDGV) are disordered. Acidic residues predominate over residues 999 to 1018 (EEEEQDEEEEDEDEEEEEDQ). The helical transmembrane segment at 1890–1910 (FLYNLSFIYNVYNYLILIYIY) threads the bilayer.

It localises to the membrane. This is an uncharacterized protein from Plasmodium falciparum (isolate 3D7).